A 96-amino-acid polypeptide reads, in one-letter code: 5-hydroxytryptamine receptor 2B (96 aa).

Residues 1 to 8 (CNQSTLQM) lie on the Extracellular side of the membrane. A glycan (N-linked (GlcNAc...) asparagine) is linked at Asn-2. A helical transmembrane segment spans residues 9–30 (LLEIFVWIGYVSSGVNPLVYTL). The short motif at 24 to 28 (NPLVY) is the NPxxY motif; important for ligand-induced conformation changes and signaling element. The Cytoplasmic segment spans residues 31–96 (FNKTFRDAFG…STMYQSPVRL (66 aa)). Cys-45 is lipidated: S-palmitoyl cysteine.

Belongs to the G-protein coupled receptor 1 family. Interacts (via C-terminus) with MPDZ.

The protein resides in the cell membrane. It is found in the synapse. Its subcellular location is the synaptosome. G-protein coupled receptor for 5-hydroxytryptamine (serotonin). Also functions as a receptor for various ergot alkaloid derivatives and psychoactive substances. Ligand binding causes a conformation change that triggers signaling via guanine nucleotide-binding proteins (G proteins) and modulates the activity of downstream effectors. HTR2B is coupled to G(q)/G(11) G alpha proteins and activates phospholipase C-beta, releasing diacylglycerol (DAG) and inositol 1,4,5-trisphosphate (IP3) second messengers that modulate the activity of phosphatidylinositol 3-kinase and promote the release of Ca(2+) ions from intracellular stores, respectively. Beta-arrestin family members inhibit signaling via G proteins and mediate activation of alternative signaling pathways. Plays a role in the regulation of dopamine and 5-hydroxytryptamine release, 5-hydroxytryptamine uptake and in the regulation of extracellular dopamine and 5-hydroxytryptamine levels, and thereby affects neural activity. May play a role in the perception of pain. Plays a role in the regulation of behavior, including impulsive behavior. Required for normal proliferation of embryonic cardiac myocytes and normal heart development. Protects cardiomyocytes against apoptosis. Plays a role in the adaptation of pulmonary arteries to chronic hypoxia. Plays a role in vasoconstriction. Required for normal osteoblast function and proliferation, and for maintaining normal bone density. Required for normal proliferation of the interstitial cells of Cajal in the intestine. This Cavia porcellus (Guinea pig) protein is 5-hydroxytryptamine receptor 2B (HTR2B).